The sequence spans 86 residues: Exodeoxyribonuclease 7 small subunit (86 aa).

Residues 1–26 (MQDELFETEKAPQKNTKNAKNAPKKS) form a disordered region.

The protein belongs to the XseB family. In terms of assembly, heterooligomer composed of large and small subunits.

It is found in the cytoplasm. The enzyme catalyses Exonucleolytic cleavage in either 5'- to 3'- or 3'- to 5'-direction to yield nucleoside 5'-phosphates.. Its function is as follows. Bidirectionally degrades single-stranded DNA into large acid-insoluble oligonucleotides, which are then degraded further into small acid-soluble oligonucleotides. The chain is Exodeoxyribonuclease 7 small subunit from Helicobacter pylori (strain HPAG1).